The sequence spans 249 residues: Tetraspanin-7 (249 aa).

Over 1 to 16 the chain is Cytoplasmic; the sequence is MASRRMETKPVITCLK. Residues 17–40 form a helical membrane-spanning segment; that stretch reads TLLIIYSFVFWITGVILLAVGVWG. At 41–56 the chain is on the extracellular side; the sequence is KLTLGTYISLIAENST. The N-linked (GlcNAc...) asparagine glycan is linked to Asn-54. Residues 57 to 75 traverse the membrane as a helical segment; the sequence is NAPYVLIGTGTTIVVFGLF. Residues 76–86 are Cytoplasmic-facing; the sequence is GCFATCRGSPW. Residues 87–112 form a helical membrane-spanning segment; that stretch reads MLKLYAMFLSLVFLAELVAGISGFVF. Topologically, residues 113 to 213 are extracellular; the sequence is RHEIKDTFLR…LVTSFMETNM (101 aa). N-linked (GlcNAc...) asparagine glycans are attached at residues Asn-155, Asn-158, Asn-177, and Asn-188. The helical transmembrane segment at 214–234 threads the bilayer; that stretch reads GIIAGVAFGIAFSQLIGMLLA. The Cytoplasmic segment spans residues 235–249; that stretch reads CCLSRFITANQYEMV.

This sequence belongs to the tetraspanin (TM4SF) family.

Its subcellular location is the membrane. May be involved in cell proliferation and cell motility. This is Tetraspanin-7 (Tspan7) from Mus musculus (Mouse).